A 359-amino-acid chain; its full sequence is tRNA pseudouridine synthase B (359 aa).

The Nucleophile role is filled by Asp63.

The protein belongs to the pseudouridine synthase TruB family. Type 1 subfamily.

It catalyses the reaction uridine(55) in tRNA = pseudouridine(55) in tRNA. In terms of biological role, responsible for synthesis of pseudouridine from uracil-55 in the psi GC loop of transfer RNAs. This chain is tRNA pseudouridine synthase B, found in Psychrobacter cryohalolentis (strain ATCC BAA-1226 / DSM 17306 / VKM B-2378 / K5).